The chain runs to 417 residues: Phosphoglycerate kinase 2 (417 aa).

An N-acetylserine modification is found at Ser-2. 2 positions are modified to phosphoserine: Ser-2 and Ser-4. Position 11 is an N6-acetyllysine (Lys-11). Positions 23, 24, 25, 26, 38, and 39 each coordinate (2R)-3-phosphoglycerate. Position 48 is an N6-acetyllysine (Lys-48). (2R)-3-phosphoglycerate contacts are provided by Ser-62, His-63, Gly-65, and Arg-66. N6-acetyllysine is present on residues Lys-75, Lys-86, and Lys-97. Residues Leu-122 and Arg-123 each coordinate (2R)-3-phosphoglycerate. Lys-131 and Lys-146 each carry N6-acetyllysine. (2R)-3-phosphoglycerate-binding residues include His-170 and Arg-171. The residue at position 196 (Tyr-196) is a Phosphotyrosine. Lys-199 carries the N6-acetyllysine modification. Position 214 (Gly-214) interacts with ADP. Gly-214 lines the CDP pocket. The AMP site is built by Ala-215 and Lys-216. Residue Ala-215 participates in ATP binding. Residue Ala-215 participates in Mg(2+) binding. Residues Ala-218 and Asp-219 each contribute to the Mg(2+) site. Residue Asp-219 coordinates CDP. Lys-220 is a binding site for AMP. Residue Lys-220 participates in ATP binding. Gly-238 contacts ADP. Residue Gly-238 coordinates CDP. Gly-239 contacts AMP. Gly-239 is an ATP binding site. Lys-267 and Lys-291 each carry N6-acetyllysine. Gly-313 provides a ligand contact to AMP. Gly-313 provides a ligand contact to ATP. The CDP site is built by Gly-338 and Phe-343. Position 343 (Phe-343) interacts with ADP. Glu-344 is a binding site for AMP. Glu-344, Asp-375, and Thr-376 together coordinate ATP. Position 375 (Asp-375) interacts with Mg(2+).

The protein belongs to the phosphoglycerate kinase family. Monomer. Mg(2+) serves as cofactor. As to expression, mainly found in round spermatids. Localized on the principle piece in the sperm (at protein level). Testis-specific. Expression significantly decreased in the testis of elderly men.

It localises to the cytoplasm. The catalysed reaction is (2R)-3-phosphoglycerate + ATP = (2R)-3-phospho-glyceroyl phosphate + ADP. It functions in the pathway carbohydrate degradation; glycolysis; pyruvate from D-glyceraldehyde 3-phosphate: step 2/5. Essential for sperm motility and male fertility. Not required for the completion of spermatogenesis. This is Phosphoglycerate kinase 2 (PGK2) from Homo sapiens (Human).